The sequence spans 603 residues: Elongation factor 4 (603 aa).

The 183-residue stretch at 7–189 (SRIRNFSIIA…SIVHLVPPPQ (183 aa)) folds into the tr-type G domain. GTP is bound by residues 19-24 (DHGKST) and 136-139 (NKID).

The protein belongs to the TRAFAC class translation factor GTPase superfamily. Classic translation factor GTPase family. LepA subfamily.

The protein localises to the cell inner membrane. It carries out the reaction GTP + H2O = GDP + phosphate + H(+). In terms of biological role, required for accurate and efficient protein synthesis under certain stress conditions. May act as a fidelity factor of the translation reaction, by catalyzing a one-codon backward translocation of tRNAs on improperly translocated ribosomes. Back-translocation proceeds from a post-translocation (POST) complex to a pre-translocation (PRE) complex, thus giving elongation factor G a second chance to translocate the tRNAs correctly. Binds to ribosomes in a GTP-dependent manner. In Cyanothece sp. (strain PCC 7425 / ATCC 29141), this protein is Elongation factor 4.